Reading from the N-terminus, the 390-residue chain is Dual-specificity RNA methyltransferase RlmN (390 aa).

The active-site Proton acceptor is the glutamate 110. One can recognise a Radical SAM core domain in the interval glutamate 116–aspartate 355. Cysteine 123 and cysteine 360 are oxidised to a cystine. [4Fe-4S] cluster is bound by residues cysteine 130, cysteine 134, and cysteine 137. S-adenosyl-L-methionine-binding positions include glycine 184–glutamate 185, serine 216, serine 238–histidine 240, and asparagine 317. The active-site S-methylcysteine intermediate is the cysteine 360.

This sequence belongs to the radical SAM superfamily. RlmN family. [4Fe-4S] cluster serves as cofactor.

Its subcellular location is the cytoplasm. The catalysed reaction is adenosine(2503) in 23S rRNA + 2 reduced [2Fe-2S]-[ferredoxin] + 2 S-adenosyl-L-methionine = 2-methyladenosine(2503) in 23S rRNA + 5'-deoxyadenosine + L-methionine + 2 oxidized [2Fe-2S]-[ferredoxin] + S-adenosyl-L-homocysteine. It carries out the reaction adenosine(37) in tRNA + 2 reduced [2Fe-2S]-[ferredoxin] + 2 S-adenosyl-L-methionine = 2-methyladenosine(37) in tRNA + 5'-deoxyadenosine + L-methionine + 2 oxidized [2Fe-2S]-[ferredoxin] + S-adenosyl-L-homocysteine. Functionally, specifically methylates position 2 of adenine 2503 in 23S rRNA and position 2 of adenine 37 in tRNAs. m2A2503 modification seems to play a crucial role in the proofreading step occurring at the peptidyl transferase center and thus would serve to optimize ribosomal fidelity. The sequence is that of Dual-specificity RNA methyltransferase RlmN from Haemophilus influenzae (strain ATCC 51907 / DSM 11121 / KW20 / Rd).